The sequence spans 88 residues: HssA/B-like protein 64 (88 aa).

The span at 1-24 shows a compositional bias: low complexity; sequence MTLFSSISSMSSSMTSSKSSFASF. Disordered stretches follow at residues 1–25 and 45–88; these read MTLF…ASFG and GVSS…GNSC. Residues 56-66 show a composition bias toward gly residues; it reads AKSGGDCGGKG.

This sequence belongs to the hssA/B family.

The sequence is that of HssA/B-like protein 64 (hssl64) from Dictyostelium discoideum (Social amoeba).